The chain runs to 235 residues: Large ribosomal subunit protein uL1 (235 aa).

Belongs to the universal ribosomal protein uL1 family. In terms of assembly, part of the 50S ribosomal subunit.

Binds directly to 23S rRNA. The L1 stalk is quite mobile in the ribosome, and is involved in E site tRNA release. Functionally, protein L1 is also a translational repressor protein, it controls the translation of the L11 operon by binding to its mRNA. This is Large ribosomal subunit protein uL1 from Halothermothrix orenii (strain H 168 / OCM 544 / DSM 9562).